The primary structure comprises 187 residues: Adenine phosphoribosyltransferase (187 aa).

133-137 (ATGGS) contributes to the AMP binding site.

Belongs to the purine/pyrimidine phosphoribosyltransferase family. Homodimer. It depends on Mg(2+) as a cofactor.

The protein localises to the cytoplasm. The protein resides in the nucleus. The enzyme catalyses AMP + diphosphate = 5-phospho-alpha-D-ribose 1-diphosphate + adenine. It participates in purine metabolism; AMP biosynthesis via salvage pathway; AMP from adenine: step 1/1. Its function is as follows. Catalyzes a salvage reaction resulting in the formation of AMP, that is energically less costly than de novo synthesis. The polypeptide is Adenine phosphoribosyltransferase (APT1) (Eremothecium gossypii (strain ATCC 10895 / CBS 109.51 / FGSC 9923 / NRRL Y-1056) (Yeast)).